The following is a 190-amino-acid chain: Small ribosomal subunit protein mS23 (190 aa).

Ala2 is modified (N-acetylalanine). Residue Lys83 is modified to N6-succinyllysine. The residue at position 102 (Lys102) is an N6-acetyllysine. Residues 137-190 are disordered; the sequence is KARTQQEGSQVSRKSESMGVESQTALEENPPLKEVPQAQHLESPGEESKGLSPP.

It belongs to the mitochondrion-specific ribosomal protein mS23 family. In terms of assembly, component of the mitochondrial ribosome small subunit (28S) which comprises a 12S rRNA and about 30 distinct proteins.

The protein resides in the mitochondrion. The sequence is that of Small ribosomal subunit protein mS23 from Bos taurus (Bovine).